The following is a 354-amino-acid chain: MSLDKIMNEAISPWMKGDGPDSDIVLSSRIRLARNFKKYQFSTMQNEEEAKQIQELFKKEFINKTVEPFGEFELLKMNELTPLQRRVLVEKHLISPNLAGTEYGACLLSESEHISVMLNEEDHIRIQCLFSGLQLSEALQSANQIDNWIEKEVEYAFDESLGYITSCPTNVGTGLRASVMIHLPGLVLTKRISRIIQVIQKLGLVVRGIYGEGSEALGNIFQVSNQMTLGKSEEDIIADLKSVIQQIIQQEKMARELIVQNSSIELEDKVYRSYGILANSRLIQSAEAANCLSDLRLGIDLGYIQGISRNILTELMVLTQPGILQQYAGGPLGPEERDYRRATLIRERLRIEKN.

Residues 24 to 254 (IVLSSRIRLA…QQIIQQEKMA (231 aa)) enclose the Phosphagen kinase C-terminal domain. ATP-binding positions include 27–31 (SSRIR), H92, R125, 176–180 (RASVM), and 207–212 (RGIYGE). The short motif at 337–342 (RDYRRA) is the RDXXRA motif of the pArg binding pocket involved in allosteric regulation element.

The protein belongs to the ATP:guanido phosphotransferase family.

The enzyme catalyses L-arginyl-[protein] + ATP = N(omega)-phospho-L-arginyl-[protein] + ADP + H(+). Its activity is regulated as follows. Appears to be allosterically activated by the binding of pArg-containing polypeptides to the pArg-binding pocket localized in the C-terminal domain of McsB. Its function is as follows. Catalyzes the specific phosphorylation of arginine residues in a large number of proteins. Is part of the bacterial stress response system. Protein arginine phosphorylation has a physiologically important role and is involved in the regulation of many critical cellular processes, such as protein homeostasis, motility, competence, and stringent and stress responses, by regulating gene expression and protein activity. In Bacillus thuringiensis subsp. konkukian (strain 97-27), this protein is Protein-arginine kinase.